The sequence spans 283 residues: Bifunctional protein FolD (283 aa).

Residues 165-167 and Ser-190 contribute to the NADP(+) site; that span reads GAS.

It belongs to the tetrahydrofolate dehydrogenase/cyclohydrolase family. In terms of assembly, homodimer.

It catalyses the reaction (6R)-5,10-methylene-5,6,7,8-tetrahydrofolate + NADP(+) = (6R)-5,10-methenyltetrahydrofolate + NADPH. The catalysed reaction is (6R)-5,10-methenyltetrahydrofolate + H2O = (6R)-10-formyltetrahydrofolate + H(+). Its pathway is one-carbon metabolism; tetrahydrofolate interconversion. In terms of biological role, catalyzes the oxidation of 5,10-methylenetetrahydrofolate to 5,10-methenyltetrahydrofolate and then the hydrolysis of 5,10-methenyltetrahydrofolate to 10-formyltetrahydrofolate. In Cupriavidus necator (strain ATCC 17699 / DSM 428 / KCTC 22496 / NCIMB 10442 / H16 / Stanier 337) (Ralstonia eutropha), this protein is Bifunctional protein FolD.